Here is a 274-residue protein sequence, read N- to C-terminus: Rhamnulose-1-phosphate aldolase (274 aa).

The active site involves Glu117. 3 residues coordinate Zn(2+): His141, His143, and His212.

Belongs to the aldolase class II family. RhaD subfamily. Homotetramer. Zn(2+) serves as cofactor.

It localises to the cytoplasm. The catalysed reaction is L-rhamnulose 1-phosphate = (S)-lactaldehyde + dihydroxyacetone phosphate. Its pathway is carbohydrate degradation; L-rhamnose degradation; glycerone phosphate from L-rhamnose: step 3/3. Catalyzes the reversible cleavage of L-rhamnulose-1-phosphate to dihydroxyacetone phosphate (DHAP) and L-lactaldehyde. The polypeptide is Rhamnulose-1-phosphate aldolase (Escherichia coli O81 (strain ED1a)).